A 158-amino-acid chain; its full sequence is NAD(P)H-quinone oxidoreductase subunit N (158 aa).

This sequence belongs to the complex I NdhN subunit family. As to quaternary structure, NDH-1 can be composed of about 15 different subunits; different subcomplexes with different compositions have been identified which probably have different functions.

It localises to the cellular thylakoid membrane. The catalysed reaction is a plastoquinone + NADH + (n+1) H(+)(in) = a plastoquinol + NAD(+) + n H(+)(out). It catalyses the reaction a plastoquinone + NADPH + (n+1) H(+)(in) = a plastoquinol + NADP(+) + n H(+)(out). In terms of biological role, NDH-1 shuttles electrons from an unknown electron donor, via FMN and iron-sulfur (Fe-S) centers, to quinones in the respiratory and/or the photosynthetic chain. The immediate electron acceptor for the enzyme in this species is believed to be plastoquinone. Couples the redox reaction to proton translocation, and thus conserves the redox energy in a proton gradient. Cyanobacterial NDH-1 also plays a role in inorganic carbon-concentration. This is NAD(P)H-quinone oxidoreductase subunit N from Prochlorococcus marinus (strain MIT 9215).